The primary structure comprises 370 residues: GDSL esterase/lipase At1g33811 (370 aa).

Positions 1–24 (MGILRFVLLISLNLVLFGFKTTVS) are cleaved as a signal peptide. The active-site Nucleophile is the S41. 3 N-linked (GlcNAc...) asparagine glycosylation sites follow: N203, N241, and N242. Residues D336 and H339 contribute to the active site.

It belongs to the 'GDSL' lipolytic enzyme family.

The protein localises to the secreted. The protein is GDSL esterase/lipase At1g33811 of Arabidopsis thaliana (Mouse-ear cress).